A 247-amino-acid chain; its full sequence is Virulence plasmid protein pGP6-D (247 aa).

It belongs to the UPF0137 (pGP6-D) family.

The protein is Virulence plasmid protein pGP6-D of Chlamydia trachomatis.